Reading from the N-terminus, the 429-residue chain is Glucose-1-phosphate adenylyltransferase (429 aa).

Residues Gly162, 177–178 (EK), and Ser209 each bind alpha-D-glucose 1-phosphate.

This sequence belongs to the bacterial/plant glucose-1-phosphate adenylyltransferase family. Homotetramer.

It catalyses the reaction alpha-D-glucose 1-phosphate + ATP + H(+) = ADP-alpha-D-glucose + diphosphate. The protein operates within glycan biosynthesis; glycogen biosynthesis. In terms of biological role, involved in the biosynthesis of ADP-glucose, a building block required for the elongation reactions to produce glycogen. Catalyzes the reaction between ATP and alpha-D-glucose 1-phosphate (G1P) to produce pyrophosphate and ADP-Glc. In Rippkaea orientalis (strain PCC 8801 / RF-1) (Cyanothece sp. (strain PCC 8801)), this protein is Glucose-1-phosphate adenylyltransferase.